Here is a 389-residue protein sequence, read N- to C-terminus: Choline/ethanolaminephosphotransferase 2 (389 aa).

Helical transmembrane passes span 49-69 (MITLMGFMFLLTSALLGYIYS), 141-161 (TFWFWVISAVPFFGATWEHYF), 176-196 (GLALIYCGHFFTAIVGAEWWA), 220-240 (IILFSMIFFAVIPTLAINTSN), 252-272 (MLLALAMLYPLVTLIAGVLIW), 286-306 (HLVVLGTGLAFGFLVGRMILA), 321-338 (MSLLYLPFALANALTARL), and 350-370 (VLLGYCIFTLSLYAHFATSVI).

It belongs to the CDP-alcohol phosphatidyltransferase class-I family. The cofactor is Mg(2+). Mn(2+) serves as cofactor.

It is found in the membrane. It carries out the reaction CDP-ethanolamine + a 1,2-diacyl-sn-glycerol = a 1,2-diacyl-sn-glycero-3-phosphoethanolamine + CMP + H(+). The enzyme catalyses CDP-choline + a 1,2-diacyl-sn-glycerol = a 1,2-diacyl-sn-glycero-3-phosphocholine + CMP + H(+). The protein operates within phospholipid metabolism; phosphatidylethanolamine biosynthesis; phosphatidylethanolamine from ethanolamine: step 3/3. It functions in the pathway phospholipid metabolism; phosphatidylcholine biosynthesis; phosphatidylcholine from phosphocholine: step 2/2. Its function is as follows. Catalyzes both phosphatidylcholine and phosphatidylethanolamine biosynthesis from CDP-choline and CDP-ethanolamine, respectively. Has a higher cholinephosphotransferase activity than ethanolaminephosphotransferase activity. The protein is Choline/ethanolaminephosphotransferase 2 (AAPT2) of Arabidopsis thaliana (Mouse-ear cress).